The following is a 275-amino-acid chain: Large ribosomal subunit protein uL2 (275 aa).

Positions 221 to 275 (RGMTMNPVDHPMGGGEGRSKGHIPQSPWGIPAKGYKTRKSKKPSDKLIVKRRKQK) are disordered.

This sequence belongs to the universal ribosomal protein uL2 family. In terms of assembly, part of the 50S ribosomal subunit. Forms a bridge to the 30S subunit in the 70S ribosome.

Its function is as follows. One of the primary rRNA binding proteins. Required for association of the 30S and 50S subunits to form the 70S ribosome, for tRNA binding and peptide bond formation. It has been suggested to have peptidyltransferase activity; this is somewhat controversial. Makes several contacts with the 16S rRNA in the 70S ribosome. This Kosmotoga olearia (strain ATCC BAA-1733 / DSM 21960 / TBF 19.5.1) protein is Large ribosomal subunit protein uL2.